The following is a 335-amino-acid chain: Nucleoid-associated protein YejK (335 aa).

It belongs to the YejK family.

The protein resides in the cytoplasm. It is found in the nucleoid. This is Nucleoid-associated protein YejK from Escherichia coli (strain K12 / MC4100 / BW2952).